Here is a 498-residue protein sequence, read N- to C-terminus: Phosphatidylserine synthase (498 aa).

The disordered stretch occupies residues 1 to 65; sequence MKKRTNSRGT…GSVSSAGARR (65 aa). The Cytoplasmic portion of the chain corresponds to 1–92; the sequence is MKKRTNSRGT…VDDISLDFFY (92 aa). Residues 7 to 25 are compositionally biased toward polar residues; it reads SRGTPTSSGDALLDTSFSS. The helical transmembrane segment at 93–113 threads the bilayer; the sequence is KPHTITLLAVSVLAVMYFAFV. Residues 114-122 are Lumenal-facing; that stretch reads RNEANVDEN. The chain crosses the membrane as a helical span at residues 123–143; that stretch reads LWAGLLCIVFFFLIVSVIAFP. Topologically, residues 144 to 153 are cytoplasmic; that stretch reads NGPFTRPHPA. Residues 154-174 form a helical membrane-spanning segment; that stretch reads VWRILFGCSVLYLLTLQFLMF. Residues 175–239 are Lumenal-facing; it reads QNYPTIRSIF…AFKAILIRHM (65 aa). N205 carries N-linked (GlcNAc...) asparagine glycosylation. A helical transmembrane segment spans residues 240–260; the sequence is GILWAISVMWEITEITFAHLL. Residues 261 to 266 are Cytoplasmic-facing; it reads PNFIEC. A helical membrane pass occupies residues 267–287; it reads WWDALILDVIICNGLGIWMGL. Residues 288–339 lie on the Lumenal side of the membrane; sequence KICQILEMREYKWASIKDISTTTGKIKRAMLQFTPESWSAIRWLDPKSTAMR. A helical transmembrane segment spans residues 340–360; that stretch reads FAAVIQLVIFWQVTELNTFFL. Residues 361 to 367 lie on the Cytoplasmic side of the membrane; sequence KHIFEMP. Residues 368–388 form a helical membrane-spanning segment; it reads PDHFIVIGRLIFIGLFVAPSV. Residues 389 to 402 lie on the Lumenal side of the membrane; the sequence is RQYYVYVTDTRCKR. The chain crosses the membrane as a helical span at residues 403-423; it reads VGTQCWVYGAIMVSEAILCIK. At 424–436 the chain is on the cytoplasmic side; it reads NGKELFERTQAIN. A helical membrane pass occupies residues 437–457; it reads IVLWLTVQVIISVAFVYLAVY. Over 458–498 the chain is Lumenal; it reads WQQRQLKKVSSTPAKTKETIPASSSSPSKGKLSPQKEKKLK. The segment at 465–498 is disordered; the sequence is KVSSTPAKTKETIPASSSSPSKGKLSPQKEKKLK. Low complexity predominate over residues 478 to 490; that stretch reads PASSSSPSKGKLS.

The protein belongs to the phosphatidyl serine synthase family.

It is found in the endoplasmic reticulum membrane. The enzyme catalyses a 1,2-diacyl-sn-glycero-3-phosphoethanolamine + L-serine = a 1,2-diacyl-sn-glycero-3-phospho-L-serine + ethanolamine. The protein operates within phospholipid metabolism; phosphatidylserine biosynthesis. Its function is as follows. Catalyzes a base-exchange reaction in which the polar head group of phosphatidylethanolamine (PE) is replaced by L-serine. The protein is Phosphatidylserine synthase of Drosophila melanogaster (Fruit fly).